The sequence spans 279 residues: Urease accessory protein UreD (279 aa).

This sequence belongs to the UreD family. As to quaternary structure, ureD, UreF and UreG form a complex that acts as a GTP-hydrolysis-dependent molecular chaperone, activating the urease apoprotein by helping to assemble the nickel containing metallocenter of UreC. The UreE protein probably delivers the nickel.

The protein localises to the cytoplasm. Required for maturation of urease via the functional incorporation of the urease nickel metallocenter. The sequence is that of Urease accessory protein UreD from Rhodopseudomonas palustris (strain ATCC BAA-98 / CGA009).